Consider the following 66-residue polypeptide: Beta-mammal toxin Cv1 (66 aa).

The region spanning 1–66 (KEGYIVNLST…VWPLPKKTCN (66 aa)) is the LCN-type CS-alpha/beta domain. 4 cysteine pairs are disulfide-bonded: Cys-12–Cys-65, Cys-16–Cys-41, Cys-25–Cys-46, and Cys-29–Cys-48.

As to expression, expressed by the venom gland.

It is found in the secreted. Is susceptible to be neutralized by human antibodies scFvs 10FG2 and HV. Beta toxins bind voltage-independently at site-4 of sodium channels (Nav) and reduces peak current and shifts the voltage of activation toward more negative potentials thereby affecting sodium channel activation and promoting spontaneous and repetitive firing. This toxin is slightly toxic to mice. In Centruroides villegasi (Scorpion), this protein is Beta-mammal toxin Cv1.